The primary structure comprises 231 residues: Ribonuclease 3 (231 aa).

Residues 7–135 form the RNase III domain; that stretch reads IQAIESKLNF…ILGAVYLDGG (129 aa). A Mg(2+)-binding site is contributed by E48. D52 is a catalytic residue. The Mg(2+) site is built by N121 and E124. E124 is a catalytic residue. Residues 160–229 enclose the DRBM domain; the sequence is NPKNRLQQFT…AKQALSTHDN (70 aa).

Belongs to the ribonuclease III family. As to quaternary structure, homodimer. The cofactor is Mg(2+).

The protein localises to the cytoplasm. It catalyses the reaction Endonucleolytic cleavage to 5'-phosphomonoester.. In terms of biological role, digests double-stranded RNA. Involved in the processing of primary rRNA transcript to yield the immediate precursors to the large and small rRNAs (23S and 16S). Processes some mRNAs, and tRNAs when they are encoded in the rRNA operon. Processes pre-crRNA and tracrRNA of type II CRISPR loci if present in the organism. The protein is Ribonuclease 3 of Chlamydia trachomatis serovar A (strain ATCC VR-571B / DSM 19440 / HAR-13).